Here is a 338-residue protein sequence, read N- to C-terminus: tRNA N6-adenosine threonylcarbamoyltransferase (338 aa).

Fe cation contacts are provided by His-111 and His-115. Residues 134 to 138 (LVSGG), Asp-167, Gly-180, and Asn-272 each bind substrate. Asp-300 serves as a coordination point for Fe cation.

This sequence belongs to the KAE1 / TsaD family. The cofactor is Fe(2+).

It is found in the cytoplasm. It catalyses the reaction L-threonylcarbamoyladenylate + adenosine(37) in tRNA = N(6)-L-threonylcarbamoyladenosine(37) in tRNA + AMP + H(+). In terms of biological role, required for the formation of a threonylcarbamoyl group on adenosine at position 37 (t(6)A37) in tRNAs that read codons beginning with adenine. Is involved in the transfer of the threonylcarbamoyl moiety of threonylcarbamoyl-AMP (TC-AMP) to the N6 group of A37, together with TsaE and TsaB. TsaD likely plays a direct catalytic role in this reaction. This Shewanella putrefaciens (strain CN-32 / ATCC BAA-453) protein is tRNA N6-adenosine threonylcarbamoyltransferase.